We begin with the raw amino-acid sequence, 342 residues long: Pre-mRNA-splicing factor 18 (342 aa).

Met1 is subject to N-acetylmethionine.

This sequence belongs to the PRP18 family. As to quaternary structure, heterodimer with PPIH. Interacts with PRPF4 and with the spliceosome. Part of a complex containing U4/U6 snRNPs. Also detected in the cytoplasm. Detected in brain, heart, liver and skeletal muscle.

The protein localises to the nucleus speckle. Participates in the second step of pre-mRNA splicing. Down-regulates the expression of potassium channel subunits. The polypeptide is Pre-mRNA-splicing factor 18 (Prpf18) (Rattus norvegicus (Rat)).